The sequence spans 561 residues: Malate synthase, glyoxysomal (561 aa).

The Proton acceptor role is filled by R177. The active-site Proton donor is D462. Positions 559 to 561 match the Microbody targeting signal motif; sequence SRL.

This sequence belongs to the malate synthase family.

It is found in the glyoxysome. The catalysed reaction is glyoxylate + acetyl-CoA + H2O = (S)-malate + CoA + H(+). It participates in carbohydrate metabolism; glyoxylate cycle; (S)-malate from isocitrate: step 2/2. The chain is Malate synthase, glyoxysomal from Brassica napus (Rape).